The primary structure comprises 440 residues: Xaa-Pro dipeptidase (440 aa).

Mn(2+) is bound by residues aspartate 244, aspartate 255, histidine 335, glutamate 380, and glutamate 419.

This sequence belongs to the peptidase M24B family. Bacterial-type prolidase subfamily. Mn(2+) serves as cofactor.

It carries out the reaction Xaa-L-Pro dipeptide + H2O = an L-alpha-amino acid + L-proline. Functionally, splits dipeptides with a prolyl residue in the C-terminal position. The protein is Xaa-Pro dipeptidase of Shewanella baltica (strain OS195).